Reading from the N-terminus, the 116-residue chain is Large ribosomal subunit protein uL18 (116 aa).

The protein belongs to the universal ribosomal protein uL18 family. In terms of assembly, part of the 50S ribosomal subunit; part of the 5S rRNA/L5/L18/L25 subcomplex. Contacts the 5S and 23S rRNAs.

Functionally, this is one of the proteins that bind and probably mediate the attachment of the 5S RNA into the large ribosomal subunit, where it forms part of the central protuberance. This is Large ribosomal subunit protein uL18 from Saccharophagus degradans (strain 2-40 / ATCC 43961 / DSM 17024).